A 79-amino-acid polypeptide reads, in one-letter code: Sulfur carrier protein TusA (79 aa).

Cys16 acts as the Cysteine persulfide intermediate in catalysis.

The protein belongs to the sulfur carrier protein TusA family.

Its subcellular location is the cytoplasm. In terms of biological role, sulfur carrier protein which probably makes part of a sulfur-relay system. In Pseudomonas paraeruginosa (strain DSM 24068 / PA7) (Pseudomonas aeruginosa (strain PA7)), this protein is Sulfur carrier protein TusA.